The sequence spans 384 residues: Gibberellin 3-beta-dioxygenase 1 (384 aa).

In terms of domain architecture, Fe2OG dioxygenase spans Thr225–Pro327. The Fe cation site is built by His250, Asp252, and His308. Residues Arg318 and Ser320 each coordinate 2-oxoglutarate.

Belongs to the iron/ascorbate-dependent oxidoreductase family. L-ascorbate serves as cofactor. It depends on Fe(2+) as a cofactor. In terms of tissue distribution, expressed in unopened flowers.

The catalysed reaction is gibberellin A20 + 2-oxoglutarate + O2 = gibberellin A1 + succinate + CO2. It participates in plant hormone biosynthesis; gibberellin biosynthesis. In terms of biological role, catalyzes the 3-beta-hydroxylation of the inactive gibberellin precursors, leading to the formation of bioactive gibberellins. In vitro, converts the precursors GA20, GA5, GA44 and GA9 to the corresponding 3-beta-hydroxylated bioactive products GA1, GA3, GA38 and GA4, respectively. Involved in the production of bioactive GA for vegetative growth and development. May possess 2,3-desaturase activity, catalyzing the conversion of GA9 to 2,3-dehydro-GA9, and GA20 to GA5 (2,3-dehydro GA20). May possess 2-beta-hydroxylase activity, catalyzing the conversion of GA1 and GA4 to the corresponding 2-beta-hydroxylated products GA8 and GA34, respectively. This is Gibberellin 3-beta-dioxygenase 1 from Oryza sativa subsp. japonica (Rice).